The primary structure comprises 170 residues: MSETGPSLQRPATRAARLSAIEQALATHIITSQSQLSKILIDEGIAVTQATLSRDLDEMHAVKTRLKDGTVAYAVGRSVVASEGEDVGERGEAQMSRVLNGLVTSVAAAGNLVVVHTPSGAAQYVASVIDKQPIEGVLGTIAGDDTVMVICTNDDTAVSRSDWLLSLASK.

The protein belongs to the ArgR family.

The protein resides in the cytoplasm. It functions in the pathway amino-acid biosynthesis; L-arginine biosynthesis [regulation]. Functionally, regulates arginine biosynthesis genes. This is Arginine repressor from Bifidobacterium longum (strain DJO10A).